A 60-amino-acid chain; its full sequence is UPF0434 protein Daci_3569 (60 aa).

It belongs to the UPF0434 family.

The polypeptide is UPF0434 protein Daci_3569 (Delftia acidovorans (strain DSM 14801 / SPH-1)).